Consider the following 407-residue polypeptide: Peptidase T (407 aa).

H82 contacts Zn(2+). D84 is a catalytic residue. D143 is a Zn(2+) binding site. The active-site Proton acceptor is E177. Residues E178, D200, and H382 each coordinate Zn(2+).

This sequence belongs to the peptidase M20B family. Requires Zn(2+) as cofactor.

Its subcellular location is the cytoplasm. It carries out the reaction Release of the N-terminal residue from a tripeptide.. Its function is as follows. Cleaves the N-terminal amino acid of tripeptides. This is Peptidase T from Streptococcus uberis (strain ATCC BAA-854 / 0140J).